The sequence spans 544 residues: Dynein axonemal assembly factor 3 (544 aa).

2 disordered regions span residues 328–350 and 448–544; these read RAAEGDPEQVQGGAEGSSEPAAP and TFAR…YPIP. The segment covering 522 to 536 has biased composition (polar residues); the sequence is PTGSQAPKSENQTVP.

The protein belongs to the DNAAF3 family.

Its subcellular location is the cytoplasm. The protein resides in the dynein axonemal particle. Required for the assembly of axonemal inner and outer dynein arms. Involved in preassembly of dyneins into complexes before their transport into cilia. The protein is Dynein axonemal assembly factor 3 (DNAAF3) of Bos taurus (Bovine).